A 71-amino-acid chain; its full sequence is Protein SlyX homolog (71 aa).

Residues 52-71 (RLDQAESSAGAPANERPPHY) are disordered.

Belongs to the SlyX family.

The protein is Protein SlyX homolog of Rhodopseudomonas palustris (strain ATCC BAA-98 / CGA009).